Consider the following 386-residue polypeptide: Decapping nuclease RAI1 (386 aa).

Arginine 34 contacts substrate. Residue glutamate 159 participates in a divalent metal cation binding. Glutamate 205 serves as a coordination point for substrate. A divalent metal cation contacts are provided by aspartate 207, glutamate 225, and leucine 226. Lysine 227 and glutamine 251 together coordinate substrate.

It belongs to the DXO/Dom3Z family. In terms of assembly, interacts with RAT1; the interaction is direct, stabilizes RAT1 protein structure and stimulates its exoribonuclease activity. The interaction also stimulates RAI1 pyrophosphohydrolase activity, probably by recruiting it to mRNA substrates. A divalent metal cation serves as cofactor.

Its subcellular location is the nucleus. The catalysed reaction is a 5'-end NAD(+)-phospho-ribonucleoside in mRNA + H2O = a 5'-end phospho-ribonucleoside in mRNA + NAD(+) + H(+). It carries out the reaction a 5'-end (N(7)-methyl 5'-triphosphoguanosine)-ribonucleoside-ribonucleotide in mRNA + H2O = a (N(7)-methyl 5'-triphosphoguanosine)-nucleoside + a 5'-end phospho-ribonucleoside in mRNA + H(+). The enzyme catalyses a 5'-end triphospho-ribonucleoside in mRNA + H2O = a 5'-end phospho-ribonucleoside in mRNA + diphosphate + H(+). In terms of biological role, decapping enzyme for NAD-capped RNAs: specifically hydrolyzes the nicotinamide adenine dinucleotide (NAD) cap from a subset of RNAs by removing the entire NAD moiety from the 5'-end of an NAD-capped RNA. The NAD-cap is present at the 5'-end of some RNAs and snoRNAs. In contrast to the canonical 5'-end N7 methylguanosine (m7G) cap, the NAD cap promotes mRNA decay. Also acts as a non-canonical decapping enzyme that removes the entire cap structure of m7G capped or incompletely capped RNAs. Has decapping activity toward incomplete 5'-end m7G cap mRNAs such as unmethylated 5'-end-capped RNA (cap0), while it has no activity toward 2'-O-ribose methylated m7G cap (cap1). Also possesses RNA 5'-pyrophosphohydrolase activity by hydrolyzing the 5'-end triphosphate to release pyrophosphates. Stimulates exoribonuclease activity of Rat1, allowing it to degrade RNAs with stable secondary structure more effectively. The sequence is that of Decapping nuclease RAI1 (RAI1) from Cryptococcus neoformans var. neoformans serotype D (strain B-3501A) (Filobasidiella neoformans).